Here is an 88-residue protein sequence, read N- to C-terminus: MSKGTPSLGKRHNKSHVLCNRCGKRSFHVQKKTCASCGYPAAKLRSHNWATKAKRRRTTGTGRMAYLKHVSRRFKNGFQTGVAKPQSA.

Zn(2+) is bound by residues cysteine 19, cysteine 22, cysteine 34, and cysteine 37. The C4-type zinc-finger motif lies at 19-37; that stretch reads CNRCGKRSFHVQKKTCASC.

This sequence belongs to the eukaryotic ribosomal protein eL37 family. Zn(2+) is required as a cofactor.

Functionally, binds to the 23S rRNA. The protein is Large ribosomal subunit protein eL37 (RPL37) of Debaryomyces hansenii (strain ATCC 36239 / CBS 767 / BCRC 21394 / JCM 1990 / NBRC 0083 / IGC 2968) (Yeast).